Reading from the N-terminus, the 366-residue chain is DNA primase large subunit PriL (366 aa).

Residues Cys227, Cys298, Cys307, and Cys314 each coordinate [4Fe-4S] cluster.

The protein belongs to the eukaryotic-type primase large subunit family. Heterodimer of a small subunit (PriS) and a large subunit (PriL). [4Fe-4S] cluster is required as a cofactor.

Its function is as follows. Regulatory subunit of DNA primase, an RNA polymerase that catalyzes the synthesis of short RNA molecules used as primers for DNA polymerase during DNA replication. Stabilizes and modulates the activity of the small subunit, increasing the rate of DNA synthesis, and conferring RNA synthesis capability. The DNA polymerase activity may enable DNA primase to also catalyze primer extension after primer synthesis. May also play a role in DNA repair. This Methanocella arvoryzae (strain DSM 22066 / NBRC 105507 / MRE50) protein is DNA primase large subunit PriL.